The sequence spans 1404 residues: DNA-directed RNA polymerase subunit beta' (1404 aa).

Zn(2+) is bound by residues Cys-70, Cys-72, Cys-85, and Cys-88. Residues Asp-460, Asp-462, and Asp-464 each contribute to the Mg(2+) site. Residues Cys-814, Cys-888, Cys-895, and Cys-898 each contribute to the Zn(2+) site.

It belongs to the RNA polymerase beta' chain family. As to quaternary structure, the RNAP catalytic core consists of 2 alpha, 1 beta, 1 beta' and 1 omega subunit. When a sigma factor is associated with the core the holoenzyme is formed, which can initiate transcription. Mg(2+) serves as cofactor. The cofactor is Zn(2+).

It catalyses the reaction RNA(n) + a ribonucleoside 5'-triphosphate = RNA(n+1) + diphosphate. DNA-dependent RNA polymerase catalyzes the transcription of DNA into RNA using the four ribonucleoside triphosphates as substrates. This chain is DNA-directed RNA polymerase subunit beta', found in Shewanella pealeana (strain ATCC 700345 / ANG-SQ1).